Consider the following 414-residue polypeptide: Dihydroorotase (414 aa).

His56 and His58 together coordinate Zn(2+). Residues 58–60 and Asn90 each bind substrate; that span reads HFR. Zn(2+) contacts are provided by Lys138, His171, His219, and Asp280. Lys138 carries the N6-carboxylysine modification. Asp280 is a catalytic residue. Substrate is bound at residue His284.

It belongs to the metallo-dependent hydrolases superfamily. DHOase family. Class I DHOase subfamily. Requires Zn(2+) as cofactor.

The enzyme catalyses (S)-dihydroorotate + H2O = N-carbamoyl-L-aspartate + H(+). The protein operates within pyrimidine metabolism; UMP biosynthesis via de novo pathway; (S)-dihydroorotate from bicarbonate: step 3/3. Its function is as follows. Catalyzes the reversible cyclization of carbamoyl aspartate to dihydroorotate. The sequence is that of Dihydroorotase from Thermoplasma acidophilum (strain ATCC 25905 / DSM 1728 / JCM 9062 / NBRC 15155 / AMRC-C165).